An 838-amino-acid polypeptide reads, in one-letter code: Valine--tRNA ligase (838 aa).

The short motif at 46–56 (PNLTGTLHIGH) is the 'HIGH' region element. A 'KMSKS' region motif is present at residues 514–518 (KMSKS). Position 517 (Lys-517) interacts with ATP. A coiled-coil region spans residues 768–838 (VDNAANNLAH…HLIAKLTKAE (71 aa)).

It belongs to the class-I aminoacyl-tRNA synthetase family. ValS type 1 subfamily. As to quaternary structure, monomer.

Its subcellular location is the cytoplasm. The catalysed reaction is tRNA(Val) + L-valine + ATP = L-valyl-tRNA(Val) + AMP + diphosphate. In terms of biological role, catalyzes the attachment of valine to tRNA(Val). As ValRS can inadvertently accommodate and process structurally similar amino acids such as threonine, to avoid such errors, it has a 'posttransfer' editing activity that hydrolyzes mischarged Thr-tRNA(Val) in a tRNA-dependent manner. In Mycoplasma pneumoniae (strain ATCC 29342 / M129 / Subtype 1) (Mycoplasmoides pneumoniae), this protein is Valine--tRNA ligase.